A 334-amino-acid polypeptide reads, in one-letter code: Anthranilate phosphoribosyltransferase (334 aa).

5-phospho-alpha-D-ribose 1-diphosphate contacts are provided by residues Gly-79, 82 to 83 (GD), Ser-87, 89 to 92 (NIST), 107 to 115 (KAGNRSISS), and Ser-119. Gly-79 serves as a coordination point for anthranilate. Residue Ser-91 participates in Mg(2+) binding. Asn-110 lines the anthranilate pocket. Arg-165 serves as a coordination point for anthranilate. Asp-224 and Glu-225 together coordinate Mg(2+).

It belongs to the anthranilate phosphoribosyltransferase family. As to quaternary structure, homodimer. Mg(2+) is required as a cofactor.

It catalyses the reaction N-(5-phospho-beta-D-ribosyl)anthranilate + diphosphate = 5-phospho-alpha-D-ribose 1-diphosphate + anthranilate. It participates in amino-acid biosynthesis; L-tryptophan biosynthesis; L-tryptophan from chorismate: step 2/5. Its function is as follows. Catalyzes the transfer of the phosphoribosyl group of 5-phosphorylribose-1-pyrophosphate (PRPP) to anthranilate to yield N-(5'-phosphoribosyl)-anthranilate (PRA). The chain is Anthranilate phosphoribosyltransferase from Streptococcus thermophilus (strain CNRZ 1066).